The primary structure comprises 213 residues: Eukaryotic translation initiation factor isoform 4E (213 aa).

A disordered region spans residues 1 to 37 (MATEVAAAVPPPQLDAEENSGLEAAAAEAKIQPSSGP). Residues 56 to 61 (QGAAWG), lysine 88, and 106 to 107 (WE) each bind mRNA. Cysteine 111 and cysteine 150 are oxidised to a cystine. Residues 157-162 (RQRQDK) and 202-205 (KRER) each bind mRNA.

The protein belongs to the eukaryotic initiation factor 4E family. EIF4F is a multi-subunit complex, the composition of which varies with external and internal environmental conditions. It is composed of at least EIF4A, EIF4E and EIF4G. EIF4E is also known to interact with other partners. In higher plants two isoforms of EIF4F have been identified, named isoform EIF4F and isoform EIF(iso)4F. Isoform EIF4F has subunits p220 and p26, whereas isoform EIF(iso)4F has subunits p82 and p28. As to quaternary structure, (Microbial infection) Interacts with potyvirus viral genome-linked protein (VPg) of plum pox virus (PPV) strain D both in nucleus and cytoplasm; this interaction is possible in susceptible hosts but is impaired in resistant plants. In terms of processing, according to the redox status, the Cys-111-Cys-150 disulfide bridge may have a role in regulating protein function by affecting its ability to bind capped mRNA. Mostly expressed in leaves, flower buds, leaf buds and anthers, to a lower extent in roots, stems and green immature fruit, and, at low levels, in petals.

It localises to the cytoplasm. The protein localises to the nucleus. In terms of biological role, component of the protein complex eIF4F, which is involved in the recognition of the mRNA cap, ATP-dependent unwinding of 5'-terminal secondary structure and recruitment of mRNA to the ribosome. Recognizes and binds the 7-methylguanosine-containing mRNA cap during an early step in the initiation of protein synthesis and facilitates ribosome binding by inducing the unwinding of the mRNAs secondary structures. Key component of recessive resistance to potyviruses such as the plum pox virus (PPV) strain D. Functionally, (Microbial infection) Susceptibility host factor required for viral infection by recruiting viral RNAs to the host ribosomal complex via an interaction with viral genome-linked protein (VPg). In Prunus domestica (Garden plum), this protein is Eukaryotic translation initiation factor isoform 4E.